The sequence spans 445 residues: tRNA modification GTPase MnmE (445 aa).

The (6S)-5-formyl-5,6,7,8-tetrahydrofolate site is built by R20, E79, and K119. The TrmE-type G domain occupies 215–371; sequence GLKLAIIGPP…ILKNIEEIAE (157 aa). N225 serves as a coordination point for K(+). GTP contacts are provided by residues 225–230, 244–250, and 269–272; these read NAGKSS, SNIAGTT, and DTAG. S229 lines the Mg(2+) pocket. Residues S244, I246, and T249 each contribute to the K(+) site. Position 250 (T250) interacts with Mg(2+). Position 445 (K445) interacts with (6S)-5-formyl-5,6,7,8-tetrahydrofolate.

It belongs to the TRAFAC class TrmE-Era-EngA-EngB-Septin-like GTPase superfamily. TrmE GTPase family. In terms of assembly, homodimer. Heterotetramer of two MnmE and two MnmG subunits. K(+) serves as cofactor.

It is found in the cytoplasm. Functionally, exhibits a very high intrinsic GTPase hydrolysis rate. Involved in the addition of a carboxymethylaminomethyl (cmnm) group at the wobble position (U34) of certain tRNAs, forming tRNA-cmnm(5)s(2)U34. The sequence is that of tRNA modification GTPase MnmE from Rickettsia bellii (strain OSU 85-389).